Here is a 141-residue protein sequence, read N- to C-terminus: Protein X (141 aa).

The tract at residues 24–52 (QSSGPPFPRPAAGSAASSTSSPSPSDESD) is disordered. Positions 33–48 (PAAGSAASSTSSPSPS) are enriched in low complexity. Residues 68-113 (PCCLVFTCADLRTMDSTVNFVSWHAKRQLGMPSKDLWTPYIKDQLL) form a mitochondrial targeting sequence region.

Belongs to the orthohepadnavirus protein X family. In terms of assembly, may form homodimer. May interact with host CEBPA, CFLAR, CREB1, DDB1, E4F1, HBXIP, HSPD1/HSP60, NFKBIA, POLR2E and SMAD4. Interacts with host SMC5-SMC6 complex and induces its degradation. Interacts with host TRPC4AP; leading to prevent ubiquitination of TRPC4AP. Interacts with host PLSCR1; this interaction promotes ubiquitination and degradation of HBx and impairs HBx-mediated cell proliferation. Post-translationally, a fraction may be phosphorylated in insect cells and HepG2 cells, a human hepatoblastoma cell line. Phosphorylated in vitro by host protein kinase C or mitogen-activated protein kinase. N-acetylated in insect cells.

The protein localises to the host cytoplasm. The protein resides in the host nucleus. It is found in the host mitochondrion. Functionally, multifunctional protein that plays a role in silencing host antiviral defenses and promoting viral transcription. Does not seem to be essential for HBV infection. May be directly involved in development of cirrhosis and liver cancer (hepatocellular carcinoma). Most of cytosolic activities involve modulation of cytosolic calcium. The effect on apoptosis is controversial depending on the cell types in which the studies have been conducted. May induce apoptosis by localizing in mitochondria and causing loss of mitochondrial membrane potential. May also modulate apoptosis by binding host CFLAR, a key regulator of the death-inducing signaling complex (DISC). Promotes viral transcription by using the host E3 ubiquitin ligase DDB1 to target the SMC5-SMC6 complex to proteasomal degradation. This host complex would otherwise bind to viral episomal DNA, and prevents its transcription. Moderately stimulates transcription of many different viral and cellular transcription elements. Promoters and enhancers stimulated by HBx contain DNA binding sites for NF-kappa-B, AP-1, AP-2, c-EBP, ATF/CREB, or the calcium-activated factor NF-AT. The sequence is that of Protein X from Marmota monax (Woodchuck).